We begin with the raw amino-acid sequence, 259 residues long: Histidinol-phosphatase (259 aa).

Residues Glu-66, Asp-82, Ile-84, Asp-85, and Asp-207 each contribute to the Mg(2+) site. Residue Glu-66 participates in substrate binding. Residues 84–87 (IDGT) and Asp-207 contribute to the substrate site.

The protein belongs to the inositol monophosphatase superfamily. The cofactor is Mg(2+).

The enzyme catalyses L-histidinol phosphate + H2O = L-histidinol + phosphate. It participates in amino-acid biosynthesis; L-histidine biosynthesis; L-histidine from 5-phospho-alpha-D-ribose 1-diphosphate: step 8/9. Functionally, catalyzes the dephosphorylation of histidinol-phosphate to histidinol, the direct precursor of histidine. The protein is Histidinol-phosphatase (hisN) of Chlorobaculum parvum (strain DSM 263 / NCIMB 8327) (Chlorobium vibrioforme subsp. thiosulfatophilum).